The sequence spans 441 residues: tRNA-2-methylthio-N(6)-dimethylallyladenosine synthase (441 aa).

The MTTase N-terminal domain occupies 3–119 (KKVSIRTFGC…LPGLIRNAFQ (117 aa)). Cys-12, Cys-48, Cys-82, Cys-155, Cys-159, and Cys-162 together coordinate [4Fe-4S] cluster. Residues 141–371 (RSGSISAFIP…IDLQSGISGE (231 aa)) form the Radical SAM core domain. One can recognise a TRAM domain in the interval 374-437 (GNDVGSVQEV…QATLIGRCQD (64 aa)).

This sequence belongs to the methylthiotransferase family. MiaB subfamily. In terms of assembly, monomer. The cofactor is [4Fe-4S] cluster.

The protein resides in the cytoplasm. The enzyme catalyses N(6)-dimethylallyladenosine(37) in tRNA + (sulfur carrier)-SH + AH2 + 2 S-adenosyl-L-methionine = 2-methylsulfanyl-N(6)-dimethylallyladenosine(37) in tRNA + (sulfur carrier)-H + 5'-deoxyadenosine + L-methionine + A + S-adenosyl-L-homocysteine + 2 H(+). Catalyzes the methylthiolation of N6-(dimethylallyl)adenosine (i(6)A), leading to the formation of 2-methylthio-N6-(dimethylallyl)adenosine (ms(2)i(6)A) at position 37 in tRNAs that read codons beginning with uridine. The protein is tRNA-2-methylthio-N(6)-dimethylallyladenosine synthase of Prosthecochloris aestuarii (strain DSM 271 / SK 413).